The following is a 354-amino-acid chain: Type II restriction enzyme BanI (354 aa).

As to quaternary structure, homodimer.

The enzyme catalyses Endonucleolytic cleavage of DNA to give specific double-stranded fragments with terminal 5'-phosphates.. In terms of biological role, a P subtype restriction enzyme that recognizes the double-stranded sequence 5'-GGYRCC-3' and cleaves after G-1. The protein is Type II restriction enzyme BanI (banIR) of Aneurinibacillus aneurinilyticus (Bacillus aneurinolyticus).